A 140-amino-acid chain; its full sequence is Transcription antitermination protein NusB (140 aa).

The protein belongs to the NusB family.

Functionally, involved in transcription antitermination. Required for transcription of ribosomal RNA (rRNA) genes. Binds specifically to the boxA antiterminator sequence of the ribosomal RNA (rrn) operons. The polypeptide is Transcription antitermination protein NusB (Pseudoalteromonas atlantica (strain T6c / ATCC BAA-1087)).